A 121-amino-acid polypeptide reads, in one-letter code: NAD(P)H-quinone oxidoreductase subunit 3, chloroplastic (121 aa).

The next 3 membrane-spanning stretches (helical) occupy residues 10–30, 65–85, and 90–110; these read FWAF…VSNL, MFAL…PWAM, and LGII…IGLI.

This sequence belongs to the complex I subunit 3 family. As to quaternary structure, NDH is composed of at least 16 different subunits, 5 of which are encoded in the nucleus.

The protein resides in the plastid. It localises to the chloroplast thylakoid membrane. The enzyme catalyses a plastoquinone + NADH + (n+1) H(+)(in) = a plastoquinol + NAD(+) + n H(+)(out). The catalysed reaction is a plastoquinone + NADPH + (n+1) H(+)(in) = a plastoquinol + NADP(+) + n H(+)(out). Functionally, NDH shuttles electrons from NAD(P)H:plastoquinone, via FMN and iron-sulfur (Fe-S) centers, to quinones in the photosynthetic chain and possibly in a chloroplast respiratory chain. The immediate electron acceptor for the enzyme in this species is believed to be plastoquinone. Couples the redox reaction to proton translocation, and thus conserves the redox energy in a proton gradient. In Staurastrum punctulatum (Green alga), this protein is NAD(P)H-quinone oxidoreductase subunit 3, chloroplastic.